A 148-amino-acid chain; its full sequence is Probable DNA-directed RNA polymerases I, II, and III subunit RPABC3 (148 aa).

The non-specific ssDNA binding stretch occupies residues 16-40; that stretch reads DPDGKKFDRVSRYFCDAESFKMELI.

It belongs to the eukaryotic RPB8 RNA polymerase subunit family. Component of the RNA polymerase I (Pol I), RNA polymerase II (Pol II) and RNA polymerase III (Pol III) complexes consisting of at least 13, 12 and 17 subunits, respectively. Directly interacts with POLR2A.

It localises to the nucleus. DNA-dependent RNA polymerase catalyzes the transcription of DNA into RNA using the four ribonucleoside triphosphates as substrates. Common component of RNA polymerases I, II and III which synthesize ribosomal RNA precursors, mRNA precursors and many functional non-coding RNAs, and small RNAs, such as 5S rRNA and tRNAs, respectively. The protein is Probable DNA-directed RNA polymerases I, II, and III subunit RPABC3 of Caenorhabditis briggsae.